A 516-amino-acid polypeptide reads, in one-letter code: GMP synthase [glutamine-hydrolyzing] (516 aa).

The region spanning 8–198 (KILILDFGSQ…VVNICGCDTL (191 aa)) is the Glutamine amidotransferase type-1 domain. Cys-84 (nucleophile) is an active-site residue. Residues His-172 and Glu-174 contribute to the active site. The 193-residue stretch at 199 to 391 (WNIENIIEND…LGLPYNMLYR (193 aa)) folds into the GMPS ATP-PPase domain. ATP is bound at residue 226–232 (SGGVDSS).

Homodimer.

The enzyme catalyses XMP + L-glutamine + ATP + H2O = GMP + L-glutamate + AMP + diphosphate + 2 H(+). It participates in purine metabolism; GMP biosynthesis; GMP from XMP (L-Gln route): step 1/1. Its function is as follows. Catalyzes the synthesis of GMP from XMP. This Francisella tularensis subsp. novicida (strain U112) protein is GMP synthase [glutamine-hydrolyzing].